The primary structure comprises 542 residues: Global nitrogen regulator NrpR (542 aa).

The segment at 12–77 (IEILDILSKS…VITERGLEEL (66 aa)) is winged helix-turn-helix. NRD regions lie at residues 85–320 (RLGS…KANI) and 321–542 (RIKT…YKEI).

The protein belongs to the NrpR family. Homodimer.

Its activity is regulated as follows. Under nitrogen limitation, binding of the intracellular nitrogen metabolite 2-oxoglutarate to NrpR decreases the binding affinity of NrpR to DNA, leading to initiation of transcription. Transcriptional repressor of nitrogen fixation and assimilation genes. Binds to two tandem operators in the glnA and nif promoters, thereby blocking transcription of the genes. This Methanocaldococcus jannaschii (strain ATCC 43067 / DSM 2661 / JAL-1 / JCM 10045 / NBRC 100440) (Methanococcus jannaschii) protein is Global nitrogen regulator NrpR.